The following is a 217-amino-acid chain: Chaperone protein TorD (217 aa).

The protein belongs to the TorD/DmsD family. TorD subfamily.

Its subcellular location is the cytoplasm. Involved in the biogenesis of TorA. Acts on TorA before the insertion of the molybdenum cofactor and, as a result, probably favors a conformation of the apoenzyme that is competent for acquiring the cofactor. This is Chaperone protein TorD from Shewanella oneidensis (strain ATCC 700550 / JCM 31522 / CIP 106686 / LMG 19005 / NCIMB 14063 / MR-1).